The chain runs to 546 residues: Chaperonin GroEL (546 aa).

ATP-binding positions include 29 to 32 (TMGP), K50, 86 to 90 (DGTTT), G414, and D492.

It belongs to the chaperonin (HSP60) family. Forms a cylinder of 14 subunits composed of two heptameric rings stacked back-to-back. Interacts with the co-chaperonin GroES.

It localises to the cytoplasm. It carries out the reaction ATP + H2O + a folded polypeptide = ADP + phosphate + an unfolded polypeptide.. Functionally, together with its co-chaperonin GroES, plays an essential role in assisting protein folding. The GroEL-GroES system forms a nano-cage that allows encapsulation of the non-native substrate proteins and provides a physical environment optimized to promote and accelerate protein folding. The protein is Chaperonin GroEL of Helicobacter pylori (strain P12).